A 329-amino-acid chain; its full sequence is Ferredoxin--NADP reductase 2 (329 aa).

Thr-18, Glu-37, Gln-45, Tyr-50, Val-90, Phe-124, Asp-285, and Ser-326 together coordinate FAD.

This sequence belongs to the ferredoxin--NADP reductase type 2 family. Homodimer. Requires FAD as cofactor.

It catalyses the reaction 2 reduced [2Fe-2S]-[ferredoxin] + NADP(+) + H(+) = 2 oxidized [2Fe-2S]-[ferredoxin] + NADPH. The polypeptide is Ferredoxin--NADP reductase 2 (Bacillus mycoides (strain KBAB4) (Bacillus weihenstephanensis)).